The sequence spans 367 residues: Pepsin A (367 aa).

The propeptide at 1-42 is activation peptide; that stretch reads SIHRVPLKKGKSLRKQLKDHGLLEDFLKKHPYNPASKYHPVL. Positions 59-364 constitute a Peptidase A1 domain; it reads YYGTISIGTP…DRANNKVGLS (306 aa). Residue Asp77 is part of the active site. The cysteines at positions 90 and 95 are disulfide-linked. N-linked (GlcNAc...) asparagine glycosylation occurs at Asn113. A disulfide bridge links Cys251 with Cys255. The active site involves Asp260. Cys290 and Cys323 are oxidised to a cystine.

The protein belongs to the peptidase A1 family.

The catalysed reaction is Preferential cleavage: hydrophobic, preferably aromatic, residues in P1 and P1' positions. Cleaves 1-Phe-|-Val-2, 4-Gln-|-His-5, 13-Glu-|-Ala-14, 14-Ala-|-Leu-15, 15-Leu-|-Tyr-16, 16-Tyr-|-Leu-17, 23-Gly-|-Phe-24, 24-Phe-|-Phe-25 and 25-Phe-|-Tyr-26 bonds in the B chain of insulin.. Its function is as follows. Shows particularly broad specificity; although bonds involving phenylalanine and leucine are preferred, many others are also cleaved to some extent. This chain is Pepsin A (PGA), found in Gallus gallus (Chicken).